The following is a 694-amino-acid chain: uncharacterized protein (694 aa).

In terms of domain architecture, Resolvase/invertase-type recombinase catalytic spans aspartate 17–glycine 168. Residue serine 25 is the O-(5'-phospho-DNA)-serine intermediate of the active site. The recombinase DNA-binding region spans proline 175–glycine 316. A helical transmembrane segment spans residues alanine 386–valine 406.

It localises to the membrane. This is an uncharacterized protein from Sinorhizobium fredii (strain NBRC 101917 / NGR234).